The primary structure comprises 363 residues: Pyrimidine monooxygenase RutA (363 aa).

FMN is bound by residues 49-50, asparagine 115, glutamate 124, 140-141, and serine 190; these read IK and RY.

It belongs to the NtaA/SnaA/DszA monooxygenase family. RutA subfamily.

The enzyme catalyses uracil + FMNH2 + NADH + O2 = (Z)-3-ureidoacrylate + FMN + NAD(+) + H2O + H(+). It catalyses the reaction thymine + FMNH2 + NADH + O2 = (Z)-2-methylureidoacrylate + FMN + NAD(+) + H2O + H(+). Functionally, catalyzes the pyrimidine ring opening between N-3 and C-4 by an unusual flavin hydroperoxide-catalyzed mechanism, adding oxygen atoms in the process to yield ureidoacrylate peracid, that immediately reacts with FMN forming ureidoacrylate and FMN-N(5)-oxide. The FMN-N(5)-oxide reacts spontaneously with NADH to produce FMN. Requires the flavin reductase RutF to regenerate FMN in vivo. This chain is Pyrimidine monooxygenase RutA, found in Enterobacter sp. (strain 638).